The chain runs to 223 residues: Deoxyribose-phosphate aldolase (223 aa).

Residue D89 is the Proton donor/acceptor of the active site. Catalysis depends on K152, which acts as the Schiff-base intermediate with acetaldehyde. K181 functions as the Proton donor/acceptor in the catalytic mechanism.

It belongs to the DeoC/FbaB aldolase family. DeoC type 1 subfamily.

The protein localises to the cytoplasm. It carries out the reaction 2-deoxy-D-ribose 5-phosphate = D-glyceraldehyde 3-phosphate + acetaldehyde. It participates in carbohydrate degradation; 2-deoxy-D-ribose 1-phosphate degradation; D-glyceraldehyde 3-phosphate and acetaldehyde from 2-deoxy-alpha-D-ribose 1-phosphate: step 2/2. Its function is as follows. Catalyzes a reversible aldol reaction between acetaldehyde and D-glyceraldehyde 3-phosphate to generate 2-deoxy-D-ribose 5-phosphate. The sequence is that of Deoxyribose-phosphate aldolase from Listeria welshimeri serovar 6b (strain ATCC 35897 / DSM 20650 / CCUG 15529 / CIP 8149 / NCTC 11857 / SLCC 5334 / V8).